A 684-amino-acid polypeptide reads, in one-letter code: Phenoloxidase 1 (684 aa).

Positions 1–50 are cleaved as a propeptide — removed by PPAF1; it reads MSDKNKLLLLFDRPLETVIVPRGPDQEAFDVPVDLLSDRYKAIGVQVSNR. Asn80 carries an N-linked (GlcNAc...) asparagine glycan. Residues His208, His212, and His237 each coordinate Cu cation. Glu349 acts as the Proton acceptor in catalysis. 2 N-linked (GlcNAc...) asparagine glycosylation sites follow: Asn352 and Asn356. Cu cation contacts are provided by His364, His368, and His404. Residues Asn486, Asn491, and Asn545 are each glycosylated (N-linked (GlcNAc...) asparagine). 2 disulfide bridges follow: Cys579-Cys621 and Cys581-Cys628.

This sequence belongs to the tyrosinase family. In terms of assembly, dimer. Might form a homodimer or a heterodimer with PPO1. Might interact with PPAF2 (via CLIP domain); the interaction might be required for PPO1 activity. Requires Cu(2+) as cofactor. In terms of processing, propeptide cleaved by PPAF1. As to expression, hemocytes.

The protein resides in the secreted. Its function is as follows. This is a copper-containing oxidase that functions in the formation of pigments such as melanins and other polyphenolic compounds. Catalyzes the oxidation of o-diphenols (N-acetyldopamine, 4-methylcatechol and dopamine). Cannot oxidize monophenols and p-phenols (L-tyrosine, tyramine, gentisic acid and hydroquinone). Binds to the surface of hemocytes and is involved in hemocyte melanization. Activation of the enzyme in response to bacterial lipopolysaccharides (LPS) suggests it may play a role in innate immunity. The sequence is that of Phenoloxidase 1 from Holotrichia diomphalia (Korean black chafer).